The primary structure comprises 335 residues: Phosphate acyltransferase (335 aa).

The protein belongs to the PlsX family. In terms of assembly, homodimer. Probably interacts with PlsY.

It is found in the cytoplasm. It catalyses the reaction a fatty acyl-[ACP] + phosphate = an acyl phosphate + holo-[ACP]. The protein operates within lipid metabolism; phospholipid metabolism. Functionally, catalyzes the reversible formation of acyl-phosphate (acyl-PO(4)) from acyl-[acyl-carrier-protein] (acyl-ACP). This enzyme utilizes acyl-ACP as fatty acyl donor, but not acyl-CoA. This chain is Phosphate acyltransferase, found in Streptococcus uberis (strain ATCC BAA-854 / 0140J).